Reading from the N-terminus, the 1164-residue chain is Nuclear exosome regulator NRDE2 (1164 aa).

2 disordered regions span residues methionine 1–tryptophan 25 and leucine 39–phenylalanine 149. Alanine 2 bears the N-acetylalanine mark. The span at leucine 61 to lysine 73 shows a compositional bias: basic and acidic residues. A coiled-coil region spans residues leucine 61–leucine 383. The span at lysine 74 to glycine 103 shows a compositional bias: basic residues. Residues serine 110–glutamate 133 are compositionally biased toward basic and acidic residues. The segment at phenylalanine 163–threonine 266 is MID/MTR4-interacting domain. Residues threonine 279–alanine 305 are disordered. HAT repeat units follow at residues alanine 305–glutamate 337, tryptophan 395–serine 427, serine 758–leucine 792, tyrosine 978–lysine 1010, and glycine 1067–serine 1101.

The protein belongs to the NRDE2 family. In terms of assembly, interacts with MTREX; the interaction is direct and stabilizes NRDE2. Interacts with EXOSC10, EFTUD2 and EIF4A3.

It is found in the nucleus speckle. It localises to the nucleus. The protein localises to the nucleolus. Its subcellular location is the nucleoplasm. Protein of the nuclear speckles that regulates RNA degradation and export from the nucleus through its interaction with MTREX an essential factor directing various RNAs to exosomal degradation. Changes the conformation of MTREX, precluding its association with the nuclear exosome and interaction with proteins required for its function in RNA exosomal degradation. Negatively regulates, for instance, the degradation of mRNAs and lncRNAs by inhibiting their MTREX-mediated recruitment to nuclear exosome. By preventing the degradation of RNAs in the nucleus, it promotes their export to the cytoplasm. U5 snRNP-associated RNA splicing factor which is required for efficient splicing of CEP131 pre-mRNA and plays an important role in centrosome maturation, integrity and function during mitosis. Suppresses intron retention in a subset of pre-mRNAs containing short, GC-rich introns with relatively weak 5' and 3' splice sites. Plays a role in DNA damage response. The sequence is that of Nuclear exosome regulator NRDE2 from Homo sapiens (Human).